The following is a 72-amino-acid chain: NAD(P)H-quinone oxidoreductase subunit O (72 aa).

It belongs to the complex I NdhO subunit family. NDH-1 can be composed of about 15 different subunits; different subcomplexes with different compositions have been identified which probably have different functions.

The protein resides in the cellular thylakoid membrane. It carries out the reaction a plastoquinone + NADH + (n+1) H(+)(in) = a plastoquinol + NAD(+) + n H(+)(out). The enzyme catalyses a plastoquinone + NADPH + (n+1) H(+)(in) = a plastoquinol + NADP(+) + n H(+)(out). Functionally, NDH-1 shuttles electrons from an unknown electron donor, via FMN and iron-sulfur (Fe-S) centers, to quinones in the respiratory and/or the photosynthetic chain. The immediate electron acceptor for the enzyme in this species is believed to be plastoquinone. Couples the redox reaction to proton translocation, and thus conserves the redox energy in a proton gradient. Cyanobacterial NDH-1 also plays a role in inorganic carbon-concentration. This chain is NAD(P)H-quinone oxidoreductase subunit O, found in Trichodesmium erythraeum (strain IMS101).